Consider the following 618-residue polypeptide: Phosphoenolpyruvate carboxykinase [GTP] (618 aa).

Residues Arg83 and 217-219 (YGG) contribute to the substrate site. The Mn(2+) site is built by Lys226 and His245. Substrate is bound at residue Ser267. GTP is bound at residue 268-273 (MCGKTS). Cys269 is a catalytic residue. Asp286 serves as a coordination point for Mn(2+). 381 to 383 (NAR) is a binding site for substrate. Arg383 and Arg415 together coordinate GTP.

It belongs to the phosphoenolpyruvate carboxykinase [GTP] family. Mn(2+) is required as a cofactor.

It localises to the cytoplasm. It carries out the reaction oxaloacetate + GTP = phosphoenolpyruvate + GDP + CO2. It functions in the pathway carbohydrate biosynthesis; gluconeogenesis. In terms of biological role, catalyzes the conversion of oxaloacetate (OAA) to phosphoenolpyruvate (PEP), the rate-limiting step in the metabolic pathway that produces glucose from lactate and other precursors derived from the citric acid cycle. The polypeptide is Phosphoenolpyruvate carboxykinase [GTP] (Pyrococcus abyssi (strain GE5 / Orsay)).